The following is a 457-amino-acid chain: Siroheme synthase (457 aa).

The precorrin-2 dehydrogenase /sirohydrochlorin ferrochelatase stretch occupies residues 1–204 (MDHLPIFCQL…ADEKAVNATT (204 aa)). Residues 22–23 (DV) and 43–44 (LT) contribute to the NAD(+) site. At S128 the chain carries Phosphoserine. The uroporphyrinogen-III C-methyltransferase stretch occupies residues 216–457 (GEVVLVGAGP…RDKLNWFSNH (242 aa)). Residue P225 coordinates S-adenosyl-L-methionine. D248 functions as the Proton acceptor in the catalytic mechanism. K270 serves as the catalytic Proton donor. Residues 301–303 (GGD), I306, 331–332 (TA), M382, and G411 contribute to the S-adenosyl-L-methionine site.

The protein in the N-terminal section; belongs to the precorrin-2 dehydrogenase / sirohydrochlorin ferrochelatase family. It in the C-terminal section; belongs to the precorrin methyltransferase family.

The enzyme catalyses uroporphyrinogen III + 2 S-adenosyl-L-methionine = precorrin-2 + 2 S-adenosyl-L-homocysteine + H(+). The catalysed reaction is precorrin-2 + NAD(+) = sirohydrochlorin + NADH + 2 H(+). It carries out the reaction siroheme + 2 H(+) = sirohydrochlorin + Fe(2+). It functions in the pathway cofactor biosynthesis; adenosylcobalamin biosynthesis; precorrin-2 from uroporphyrinogen III: step 1/1. It participates in cofactor biosynthesis; adenosylcobalamin biosynthesis; sirohydrochlorin from precorrin-2: step 1/1. The protein operates within porphyrin-containing compound metabolism; siroheme biosynthesis; precorrin-2 from uroporphyrinogen III: step 1/1. Its pathway is porphyrin-containing compound metabolism; siroheme biosynthesis; siroheme from sirohydrochlorin: step 1/1. It functions in the pathway porphyrin-containing compound metabolism; siroheme biosynthesis; sirohydrochlorin from precorrin-2: step 1/1. Its function is as follows. Multifunctional enzyme that catalyzes the SAM-dependent methylations of uroporphyrinogen III at position C-2 and C-7 to form precorrin-2 via precorrin-1. Then it catalyzes the NAD-dependent ring dehydrogenation of precorrin-2 to yield sirohydrochlorin. Finally, it catalyzes the ferrochelation of sirohydrochlorin to yield siroheme. The sequence is that of Siroheme synthase from Salmonella schwarzengrund (strain CVM19633).